A 1333-amino-acid chain; its full sequence is DNA-directed RNA polymerase subunit beta' (1333 aa).

Cys-60, Cys-62, Cys-75, and Cys-78 together coordinate Zn(2+). Asp-535, Asp-537, and Asp-539 together coordinate Mg(2+). Residues Cys-901, Cys-983, Cys-990, and Cys-993 each coordinate Zn(2+).

Belongs to the RNA polymerase beta' chain family. As to quaternary structure, the RNAP catalytic core consists of 2 alpha, 1 beta, 1 beta' and 1 omega subunit. When a sigma factor is associated with the core the holoenzyme is formed, which can initiate transcription. The cofactor is Mg(2+). It depends on Zn(2+) as a cofactor.

It catalyses the reaction RNA(n) + a ribonucleoside 5'-triphosphate = RNA(n+1) + diphosphate. Its function is as follows. DNA-dependent RNA polymerase catalyzes the transcription of DNA into RNA using the four ribonucleoside triphosphates as substrates. This chain is DNA-directed RNA polymerase subunit beta', found in Corynebacterium glutamicum (strain ATCC 13032 / DSM 20300 / JCM 1318 / BCRC 11384 / CCUG 27702 / LMG 3730 / NBRC 12168 / NCIMB 10025 / NRRL B-2784 / 534).